A 450-amino-acid polypeptide reads, in one-letter code: Putative zinc metalloprotease TP_0600 (450 aa).

His18 lines the Zn(2+) pocket. Residue Glu19 is part of the active site. His22 is a binding site for Zn(2+). The helical transmembrane segment at 102–124 threads the bilayer; sequence IAFAGPLANVLMAVMVLALVSAL. The PDZ domain maps to 200–278; it reads TITPDRDAHT…SVVLTVLRSG (79 aa). The next 2 membrane-spanning stretches (helical) occupy residues 384-406 and 421-443; these read VCVS…LILF and VLYY…AFWN.

It belongs to the peptidase M50B family. The cofactor is Zn(2+).

It localises to the cell inner membrane. The chain is Putative zinc metalloprotease TP_0600 from Treponema pallidum (strain Nichols).